The chain runs to 218 residues: Ras-related protein Rab-4A (218 aa).

Gly23, Thr24, Gly25, Lys26, Ser27, and Cys28 together coordinate GDP. Residues Gly23, Thr24, Gly25, Lys26, Ser27, Cys28, Ser42, His44, and Thr45 each contribute to the GTP site. Residue Ser27 participates in Mg(2+) binding. Residues 44 to 49 (HTIGVE) carry the Switch 1 motif. Mg(2+) contacts are provided by Thr45 and Asp68. The short motif at 70-79 (AGQERFRSVT) is the Switch 2 element. Gly71 lines the GTP pocket. 5-glutamyl serotonin is present on Gln72. Asn126, Lys127, Asp129, Ala157, and Leu158 together coordinate GDP. The GTP site is built by Asn126, Lys127, Asp129, Ala157, and Leu158. Ser190 carries the phosphoserine modification. A Phosphoserine; by CDK1 modification is found at Ser204. 2 S-geranylgeranyl cysteine lipidation sites follow: Cys216 and Cys218. Cys218 carries the post-translational modification Cysteine methyl ester.

The protein belongs to the small GTPase superfamily. Rab family. As to quaternary structure, interacts with SGSM1, SGSM2 and SGSM3. Interacts with RAB11FIP1, RABEP1, ZFYVE20 and RUFY1. Interacts (membrane-bound form) with NDRG1; the interaction involves NDRG1 in vesicular recycling of E-cadherin. Interacts (in GTP-bound form) with GRIPAP1 (via N-terminus). Interacts with RABEP1 and RBSN. Does not interact with HPS4. Interacts with RABEP2; this interaction may mediate VEGFR2 cell surface expression. The cofactor is Mg(2+). Post-translationally, phosphorylated by CDK1 kinase during mitosis. In terms of processing, serotonylation of Gln-72 by TGM2 during activation and aggregation of platelets leads to constitutive activation of GTPase activity.

Its subcellular location is the membrane. The protein resides in the cytoplasm. The protein localises to the early endosome membrane. It is found in the recycling endosome membrane. It carries out the reaction GTP + H2O = GDP + phosphate + H(+). Its activity is regulated as follows. Regulated by guanine nucleotide exchange factors (GEFs) which promote the exchange of bound GDP for free GTP. Regulated by GTPase activating proteins (GAPs) which increase the GTP hydrolysis activity. Inhibited by GDP dissociation inhibitors (GDIs). Functionally, the small GTPases Rab are key regulators of intracellular membrane trafficking, from the formation of transport vesicles to their fusion with membranes. Rabs cycle between an inactive GDP-bound form and an active GTP-bound form that is able to recruit to membranes different sets of downstream effectors directly responsible for vesicle formation, movement, tethering and fusion. RAB4A is involved in protein transport. Also plays a role in vesicular traffic. Mediates VEGFR2 endosomal trafficking to enhance VEGFR2 signaling. Acts as a regulator of platelet alpha-granule release during activation and aggregation of platelets. This chain is Ras-related protein Rab-4A, found in Homo sapiens (Human).